Here is a 78-residue protein sequence, read N- to C-terminus: Small ribosomal subunit protein bS18 (78 aa).

The protein belongs to the bacterial ribosomal protein bS18 family. In terms of assembly, part of the 30S ribosomal subunit. Forms a tight heterodimer with protein bS6.

Binds as a heterodimer with protein bS6 to the central domain of the 16S rRNA, where it helps stabilize the platform of the 30S subunit. This is Small ribosomal subunit protein bS18 from Lactobacillus delbrueckii subsp. bulgaricus (strain ATCC 11842 / DSM 20081 / BCRC 10696 / JCM 1002 / NBRC 13953 / NCIMB 11778 / NCTC 12712 / WDCM 00102 / Lb 14).